We begin with the raw amino-acid sequence, 570 residues long: Sulfite reductase [NADPH] hemoprotein beta-component (570 aa).

[4Fe-4S] cluster-binding residues include cysteine 434, cysteine 440, cysteine 479, and cysteine 483. Residue cysteine 483 participates in siroheme binding.

The protein belongs to the nitrite and sulfite reductase 4Fe-4S domain family. In terms of assembly, alpha(8)-beta(8). The alpha component is a flavoprotein, the beta component is a hemoprotein. The cofactor is siroheme. It depends on [4Fe-4S] cluster as a cofactor.

It carries out the reaction hydrogen sulfide + 3 NADP(+) + 3 H2O = sulfite + 3 NADPH + 4 H(+). Its pathway is sulfur metabolism; hydrogen sulfide biosynthesis; hydrogen sulfide from sulfite (NADPH route): step 1/1. Functionally, component of the sulfite reductase complex that catalyzes the 6-electron reduction of sulfite to sulfide. This is one of several activities required for the biosynthesis of L-cysteine from sulfate. The protein is Sulfite reductase [NADPH] hemoprotein beta-component of Salmonella newport (strain SL254).